The primary structure comprises 43 residues: Protein PsbN (43 aa).

The helical transmembrane segment at 7-27 threads the bilayer; it reads VTIFISGLLVSFTGYALYIAF.

The protein belongs to the PsbN family.

The protein localises to the plastid. The protein resides in the chloroplast thylakoid membrane. In terms of biological role, may play a role in photosystem I and II biogenesis. The protein is Protein PsbN of Dioscorea bulbifera (Air potato).